Consider the following 982-residue polypeptide: Serine/threonine-protein kinase ATG1 (982 aa).

In terms of domain architecture, Protein kinase spans 19–324; sequence FVIGAEIGKG…FENFFAHPVI (306 aa). ATP is bound by residues 25 to 33 and K48; that span reads IGKGSFAQV. The active-site Proton acceptor is the D162. Disordered regions lie at residues 334–506, 813–834, 898–918, and 947–982; these read DDIP…REKA, RLPD…SVNG, PKRR…DGHA, and RMIS…SYSS. Composition is skewed to basic and acidic residues over residues 335–359 and 372–387; these read DIPK…KSDD and HPTD…RRVE. Over residues 388-398 the composition is skewed to low complexity; the sequence is PPSSAAESAPS. Residues 463–481 show a composition bias toward polar residues; the sequence is SNASLNRSNRESSSPTSAA.

This sequence belongs to the protein kinase superfamily. Ser/Thr protein kinase family. APG1/unc-51/ULK1 subfamily. Homodimer. Forms a ternary complex with ATG13 and ATG17. In terms of tissue distribution, uniformly detected in conidia, mycelia and appressoria (at protein level).

Its subcellular location is the cytoplasm. The protein localises to the preautophagosomal structure membrane. It carries out the reaction L-seryl-[protein] + ATP = O-phospho-L-seryl-[protein] + ADP + H(+). The catalysed reaction is L-threonyl-[protein] + ATP = O-phospho-L-threonyl-[protein] + ADP + H(+). In terms of biological role, serine/threonine protein kinase involved in the cytoplasm to vacuole transport (Cvt) and found to be essential in autophagy, where it is required for the formation of autophagosomes. Involved in the clearance of protein aggregates which cannot be efficiently cleared by the proteasome. Required for selective autophagic degradation of the nucleus (nucleophagy) as well as for mitophagy which contributes to regulate mitochondrial quantity and quality by eliminating the mitochondria to a basal level to fulfill cellular energy requirements and preventing excess ROS production. Also involved in endoplasmic reticulum-specific autophagic process, in selective removal of ER-associated degradation (ERAD) substrates. Plays a key role in ATG9 and ATG23 cycling through the pre-autophagosomal structure and is necessary to promote ATG18 binding to ATG9 through phosphorylation of ATG9. Catalyzes phosphorylation of ATG4, decreasing the interaction between ATG4 and ATG8 and impairing deconjugation of PE-conjugated forms of ATG8. Autophagy is essential to fungal development, production of appressorium turgor, and pathogenicity in rice blast disease. The polypeptide is Serine/threonine-protein kinase ATG1 (Pyricularia oryzae (strain 70-15 / ATCC MYA-4617 / FGSC 8958) (Rice blast fungus)).